Reading from the N-terminus, the 275-residue chain is Small ribosomal subunit protein uS3 (275 aa).

The 69-residue stretch at 39–107 folds into the KH type-2 domain; that stretch reads VRIYLKKKLK…PVHVNIEEIR (69 aa). Positions 216–275 are disordered; that stretch reads AAATSAEPAAEEKKTRRAPSKTAARKPAAGTDKPLVAAKPAVKRVRKVETPAADTQKSGE.

This sequence belongs to the universal ribosomal protein uS3 family. Part of the 30S ribosomal subunit. Forms a tight complex with proteins S10 and S14.

Binds the lower part of the 30S subunit head. Binds mRNA in the 70S ribosome, positioning it for translation. The polypeptide is Small ribosomal subunit protein uS3 (Polynucleobacter asymbioticus (strain DSM 18221 / CIP 109841 / QLW-P1DMWA-1) (Polynucleobacter necessarius subsp. asymbioticus)).